The following is a 250-amino-acid chain: Petrobactin import ATP-binding protein FatE (250 aa).

The ABC transporter domain maps to 2–236 (IKIDNVKKFY…TLLTDIFETR (235 aa)). 34–41 (GPNGAGKS) provides a ligand contact to ATP.

Belongs to the ABC transporter superfamily. The complex is composed of two ATP-binding proteins (FatE), two transmembrane proteins (FatC and FatD) and a solute-binding protein (FpuA).

The protein localises to the cell membrane. The catalysed reaction is a Fe(III)-siderophore(out) + ATP + H2O = a Fe(III)-siderophore(in) + ADP + phosphate + H(+). Functionally, part of an ABC transporter complex involved in ferric-petrobactin uptake. Probably responsible for energy coupling to the transport system. The sequence is that of Petrobactin import ATP-binding protein FatE from Bacillus anthracis.